The sequence spans 999 residues: Sarcoplasmic/endoplasmic reticulum calcium ATPase 3 (999 aa).

The residue at position 1 (Met-1) is an N-acetylmethionine. Residues 1 to 48 (MEEAHLLSAADVLRRFSVTAEGGLSLEQVTDARERYGPNELPTEEGKS) lie on the Cytoplasmic side of the membrane. Ser-17 is modified (phosphoserine). At Thr-19 the chain carries Phosphothreonine. Ser-25 bears the Phosphoserine mark. Residues 49–69 (LWELVVEQFEDLLVRILLLAA) form a helical membrane-spanning segment. Residues 70–89 (LVSFVLAWFEEGEETTTAFV) are Lumenal-facing. A helical membrane pass occupies residues 90–110 (EPLVIMLILVANAIVGVWQER). The Cytoplasmic portion of the chain corresponds to 111 to 253 (NAESAIEALK…PERTPLQRKL (143 aa)). Residues 254–273 (DEFGRQLSHAISVICVAVWV) traverse the membrane as a helical segment. The Lumenal portion of the chain corresponds to 274 to 295 (INIGHFADPAHGGSWLRGAVYY). Residues 296 to 313 (FKIAVALAVAAIPEGLPA) form a helical membrane-spanning segment. Ca(2+)-binding residues include Val-304, Ala-305, Ile-307, and Glu-309. Residues 314–757 (VITTCLALGT…EEGRAIYNNM (444 aa)) are Cytoplasmic-facing. Asp-351 serves as the catalytic 4-aspartylphosphate intermediate. Mg(2+)-binding residues include Asp-351 and Thr-353. Thr-353 lines the ATP pocket. Residues 370-400 (AEAEAGTCRLHEFTISGTTYTPEGEVRQGEQ) form an interaction with phospholamban 1 region. Thr-415 carries the phosphothreonine modification. 7 residues coordinate ATP: Glu-442, Arg-489, Lys-515, Arg-560, Thr-625, Gly-626, and Asp-627. At Ser-662 the chain carries Phosphoserine. The ATP site is built by Arg-678 and Lys-684. Residue Asp-703 participates in Mg(2+) binding. Asn-706 is an ATP binding site. The helical transmembrane segment at 758-777 (KQFIRYLISSNVGEVVCIFL) threads the bilayer. Positions 768 and 771 each coordinate Ca(2+). Topologically, residues 778–787 (TAILGLPEAL) are lumenal. Residues 788 to 808 (IPVQLLWVNLVTDGLPATALG) traverse the membrane as a helical segment. The interaction with phospholamban 2 stretch occupies residues 788-808 (IPVQLLWVNLVTDGLPATALG). Ca(2+)-binding residues include Asn-796, Thr-799, and Asp-800. Over 809–828 (FNPPDLDIMEKPPRNPREAL) the chain is Cytoplasmic. The chain crosses the membrane as a helical span at residues 829–851 (ISGWLFFRYLAIGVYVGLATVAA). Residues 852–897 (ATWWFLYDTEGPQVTFYQLRNFLKCSEDNPLFAGIDCKVFESRFPT) are Lumenal-facing. A helical transmembrane segment spans residues 898–917 (TMALSVLVTIEMCNALNSVS). Residue Glu-908 coordinates Ca(2+). At 918–930 (ENQSLLRMPPWLN) the chain is on the cytoplasmic side. A helical transmembrane segment spans residues 931–949 (PWLLGAVVMSMALHFLILL). Residues 950–964 (VPPLPLIFQVTPLSG) lie on the Lumenal side of the membrane. A helical transmembrane segment spans residues 965–985 (RQWGVVLQMSLPVILLDEALK). Topologically, residues 986-999 (YLSRNHMDEKKDLK) are cytoplasmic.

The protein belongs to the cation transport ATPase (P-type) (TC 3.A.3) family. Type IIA subfamily. As to quaternary structure, interacts with sarcolipin (SLN). Interacts with phospholamban (PLN). Interacts with myoregulin (MRLN). Interacts with DWORF. Interacts with VMP1. Interacts with TUNAR; the interaction occurs at low levels in low glucose conditions and is increased by high glucose levels. Requires Mg(2+) as cofactor.

It localises to the endoplasmic reticulum membrane. The protein resides in the sarcoplasmic reticulum membrane. The enzyme catalyses Ca(2+)(in) + ATP + H2O = Ca(2+)(out) + ADP + phosphate + H(+). Its activity is regulated as follows. Inhibited by sarcolipin (SLN), phospholamban (PLN) and myoregulin (MRLN). Enhanced by DWORF; DWORF increases activity by displacing sarcolipin (SLN), phospholamban (PLN) and myoregulin (MRLN). Functionally, this magnesium-dependent enzyme catalyzes the hydrolysis of ATP coupled with the transport of calcium. Transports calcium ions from the cytosol into the sarcoplasmic/endoplasmic reticulum lumen. Contributes to calcium sequestration involved in muscular excitation/contraction. The sequence is that of Sarcoplasmic/endoplasmic reticulum calcium ATPase 3 (Atp2a3) from Mus musculus (Mouse).